We begin with the raw amino-acid sequence, 411 residues long: Bifunctional protein GlmU (411 aa).

A pyrophosphorylase region spans residues 1–204; the sequence is MDAIILCAGK…NGKLHGIELN (204 aa). Residues 6 to 9, Gln74, and Gly79 contribute to the UTP site; that span reads LCAG. Residues Thr80, Gly130, Asn142, and Asn158 each coordinate N-acetyl-alpha-D-glucosamine 1-phosphate. The tract at residues 205–224 is linker; sequence GYWNDIGHPWDVLSANNRFL. The interval 225–411 is N-acetyltransferase; that stretch reads NKIISKVSGK…DELVITKKRN (187 aa). His308 acts as the Proton acceptor in catalysis. Acetyl-CoA is bound by residues Ala384 and Lys401.

This sequence in the N-terminal section; belongs to the N-acetylglucosamine-1-phosphate uridyltransferase family. It in the C-terminal section; belongs to the transferase hexapeptide repeat family.

It carries out the reaction N-acetyl-alpha-D-glucosamine 1-phosphate + UTP + H(+) = UDP-N-acetyl-alpha-D-glucosamine + diphosphate. It catalyses the reaction alpha-D-glucosamine 1-phosphate + acetyl-CoA = N-acetyl-alpha-D-glucosamine 1-phosphate + CoA + H(+). It functions in the pathway nucleotide-sugar biosynthesis; UDP-N-acetyl-alpha-D-glucosamine biosynthesis; N-acetyl-alpha-D-glucosamine 1-phosphate from alpha-D-glucosamine 6-phosphate (route II): step 2/2. The protein operates within nucleotide-sugar biosynthesis; UDP-N-acetyl-alpha-D-glucosamine biosynthesis; UDP-N-acetyl-alpha-D-glucosamine from N-acetyl-alpha-D-glucosamine 1-phosphate: step 1/1. In terms of biological role, catalyzes the last two sequential reactions in the de novo biosynthetic pathway for UDP-N-acetyl-glucosamine (UDP-GlcNAc). Responsible for the acetylation of GlcN-1-P to GlcNAc-1-P, and for the uridyl transfer from UTP to GlcNAc-1-P, to produce UDP-GlcNAc and pyrophosphate. The sequence is that of Bifunctional protein GlmU from Methanococcus maripaludis (strain C7 / ATCC BAA-1331).